The sequence spans 515 residues: Nectin-1 (515 aa).

The first 30 residues, M1–T30, serve as a signal peptide directing secretion. Residues Q31–T141 enclose the Ig-like V-type domain. Topologically, residues Q31–A355 are extracellular. N-linked (GlcNAc...) asparagine glycosylation is found at N36, N72, N139, N202, N286, N297, N307, and N332. C51 and C124 are joined by a disulfide. Ig-like C2-type domains follow at residues K145–V243 and P247–T334. 2 disulfide bridges follow: C172–C226 and C269–C316. The segment at W282–T299 is interaction with FGFR. A helical membrane pass occupies residues I356–V376. At A377–V515 the chain is on the cytoplasmic side. A disordered region spans residues Y400 to Y486. S422, S434, and S435 each carry phosphoserine. Y436 carries the phosphotyrosine modification. Over residues Y436–G445 the composition is skewed to acidic residues. A compositionally biased stretch (basic and acidic residues) spans G446–R464. A Phosphoserine modification is found at S509.

It belongs to the nectin family. (Microbial infection) Interacts with herpes pseudorabies virus/PRV envelope glycoprotein D.

The protein resides in the cell membrane. The protein localises to the cell junction. It is found in the adherens junction. Its subcellular location is the presynaptic cell membrane. In terms of biological role, (Microbial infection) Acts as a receptor for herpes simplex virus 1/HHV-1, herpes simplex virus 2/HHV-2, and pseudorabies virus/PRV. This is Nectin-1 from Sus scrofa (Pig).